The sequence spans 314 residues: Olfactory receptor 8D4 (314 aa).

The Extracellular segment spans residues 1-25; it reads MGVKNHSTVTEFLLSGLTEQAELQL. N-linked (GlcNAc...) asparagine glycosylation is present at N5. The chain crosses the membrane as a helical span at residues 26–46; the sequence is PLFCLFLGIYTVTVVGNLSMI. Topologically, residues 47–54 are cytoplasmic; sequence SIIRLNRQ. The helical transmembrane segment at 55–75 threads the bilayer; sequence LHTPMYYFLSSLSFLDFCYSS. Topologically, residues 76–99 are extracellular; that stretch reads VITPKMLSGFLCRDRSISYSGCMI. An intrachain disulfide couples C97 to C189. Residues 100–120 traverse the membrane as a helical segment; the sequence is QLFFFCVCVISECYMLAAMAC. At 121–139 the chain is on the cytoplasmic side; that stretch reads DRYVAICSPLLYRVIMSPR. A helical membrane pass occupies residues 140 to 160; the sequence is VCSLLVAAVFSVGFTDAVIHG. The Extracellular portion of the chain corresponds to 161–197; the sequence is GCILRLSFCGSNIIKHYFCDIVPLIKLSCSSTYIDEL. Residues 198–217 form a helical membrane-spanning segment; it reads LIFVIGGFNMVATSLTIIIS. Over 218 to 237 the chain is Cytoplasmic; sequence YAFILTSILRIHSKKGRCKA. A helical membrane pass occupies residues 238–258; the sequence is FSTCSSHLTAVLMFYGSLMSM. At 259–271 the chain is on the extracellular side; the sequence is YLKPASSSSLTQE. Residues 272–292 traverse the membrane as a helical segment; the sequence is KVSSVFYTTVILMLNPLIYSL. The Cytoplasmic segment spans residues 293–314; that stretch reads RNNEVRNALMKLLRRKISLSPG.

This sequence belongs to the G-protein coupled receptor 1 family.

The protein localises to the cell membrane. Odorant receptor. This chain is Olfactory receptor 8D4 (OR8D4), found in Homo sapiens (Human).